We begin with the raw amino-acid sequence, 175 residues long: Alpha-crystallin B chain (175 aa).

Residue Met-1 is modified to N-acetylmethionine. Phosphoserine is present on Ser-19. A glycan (O-linked (GlcNAc) serine) is linked at Ser-41. A phosphoserine mark is found at Ser-45 and Ser-59. In terms of domain architecture, sHSP spans 56–164 (RAPSWIDTGL…PERTIPITRE (109 aa)). His-83 contributes to the Zn(2+) binding site. Position 92 is an N6-acetyllysine (Lys-92). His-104, Glu-106, His-111, and His-119 together coordinate Zn(2+). Residues 142 to 175 (VLTVNGPRRQASGPERTIPITREEKPAVTAAPKK) are disordered. N6-acetyllysine is present on Lys-166. Thr-170 is a glycosylation site (O-linked (GlcNAc) threonine).

Belongs to the small heat shock protein (HSP20) family. Heteromer composed of three CRYAA and one CRYAB subunits. Aggregates with homologous proteins, including the small heat shock protein HSPB1, to form large heteromeric complexes. Inter-subunit bridging via zinc ions enhances stability, which is crucial as there is no protein turn over in the lens. Interacts with HSPBAP1 and TTN/titin. Interacts with TMEM109; in the cellular response to DNA damage. Interacts with DES; binds rapidly during early stages of DES filament assembly and a reduced binding seen in the later stages. Interacts with TMED10; the interaction mediates the translocation from the cytoplasm into the ERGIC (endoplasmic reticulum-Golgi intermediate compartment) and thereby secretion. Interacts with ATP6V1A and with MTOR, forming a ternary complex.

The protein localises to the cytoplasm. It localises to the nucleus. It is found in the secreted. Its subcellular location is the lysosome. Functionally, may contribute to the transparency and refractive index of the lens. Has chaperone-like activity, preventing aggregation of various proteins under a wide range of stress conditions. In lens epithelial cells, stabilizes the ATP6V1A protein, preventing its degradation by the proteasome. This Sus scrofa (Pig) protein is Alpha-crystallin B chain (CRYAB).